The following is a 63-amino-acid chain: Conotoxin Pn-B01411 (63 aa).

The N-terminal stretch at M1–A22 is a signal peptide. Positions R23 to P49 are excised as a propeptide. I62 carries the post-translational modification Isoleucine amide.

This sequence belongs to the conotoxin T superfamily. Post-translationally, contains 2 disulfide bonds that can be either 'C1-C3, C2-C4' or 'C1-C4, C2-C3', since these disulfide connectivities have been observed for conotoxins with cysteine framework V (for examples, see AC P0DQQ7 and AC P81755). In terms of tissue distribution, expressed by the venom duct.

It localises to the secreted. The polypeptide is Conotoxin Pn-B01411 (Conus pennaceus (Feathered cone)).